A 204-amino-acid chain; its full sequence is Putative AgrB-like protein (204 aa).

Transmembrane regions (helical) follow at residues 51-73 (VYGI…SYLW), 87-107 (LNCT…FQNI), 111-131 (NWIV…FAPA), 151-168 (AMIG…IPFA), and 173-190 (LIMV…PLTY).

It belongs to the AgrB family.

The protein resides in the cell membrane. Its function is as follows. May be involved in the proteolytic processing of a quorum sensing system signal molecule precursor. This chain is Putative AgrB-like protein, found in Listeria innocua serovar 6a (strain ATCC BAA-680 / CLIP 11262).